The primary structure comprises 366 residues: MVTCSMRCTEEHLLGAPAAFSSGKRKRDSGYSPGDATPGDRGEGGPDWPSAGIKKRVKYSRHRKQRLELRSCDSGVADLYETPSPSPVAPTPTNEPYDSPCTSMPDRLGLQSFSDYGHDCYLFNKSLEDKFLTVNCLKNQPQIKAESRCKLISWLIPVHKHLKLGFESLCLTVNILDRFLACTPVASDCFQLVGVTSLLIACKQVESRPPRVKQLLALCCDAFSREQLCNLECIILLKLCFRIGAPTINFFLQHFSLLRVTSVESPDTELIEATKSMTVARGIAELSLADYAFNAYSPSLVAACCLELADRMLCLRNPIGVRVSGYHQSLIKECVGKIDLLVSLNQDSLHRLLPSQFSVKSIKADN.

2 disordered regions span residues 18–55 and 80–99; these read AAFS…GIKK and YETP…PYDS.

This sequence belongs to the cyclin family.

Its subcellular location is the cytoplasm. Functionally, specifically required for generation of multiciliated cells, possibly by promoting a cell cycle state compatible with centriole amplification and maturation. Acts downstream of mcidas to promote mother centriole amplification and maturation in preparation for apical docking. This chain is Cyclin-O protein A (ccno-a), found in Xenopus laevis (African clawed frog).